A 235-amino-acid polypeptide reads, in one-letter code: STARD3 N-terminal-like protein (235 aa).

An N-acetylmethionine modification is found at M1. Residues 1–20 (MNHLPEHMENTLTGSQSSHA) form a disordered region. At 1–53 (MNHLPEHMENTLTGSQSSHASLRDIHSINPAQLMARIESYEGREKKGISDVRR) the chain is on the cytoplasmic side. Positions 10–20 (NTLTGSQSSHA) are enriched in polar residues. Phosphoserine is present on residues S15, S21, and S27. The MENTAL domain maps to 48-218 (ISDVRRTFCL…YSPPESEAGS (171 aa)). Residues 54–74 (TFCLFVTFDLLFVTLLWIIEL) form a helical membrane-spanning segment. The Extracellular segment spans residues 75 to 97 (NVNGGIENTLKKEVIHYDYYSSY). A helical membrane pass occupies residues 98 to 118 (FDIFLLAVFRFKVLILGYAVC). Residues 119-122 (RLRH) lie on the Cytoplasmic side of the membrane. Residues 123-143 (WWAIALTTAVTSAFLLAKVIL) traverse the membrane as a helical segment. Residues 144–150 (SKLFSQG) are Extracellular-facing. Residues 151–171 (AFGYVLPIISFILAWIETWFL) traverse the membrane as a helical segment. The Cytoplasmic segment spans residues 172–235 (DFKVLPQEAE…QESEKPLLEL (64 aa)). Phosphoserine is present on S193. Residues 202–235 (GLSDGQFYSPPESEAGSEEEAEEKQESEKPLLEL) are disordered. The FFAT signature appears at 208–213 (FYSPPE). Basic and acidic residues predominate over residues 225–235 (KQESEKPLLEL).

This sequence belongs to the STARD3 family. Homodimer. Interacts (via the MENTAL domain) with STARD3NL. Interacts (via FFAT motif) with VAPA. Interacts (via FFAT motif) with VAPB. Interacts (via FFAT motif) with MOSPD2 (via MSP domain).

The protein resides in the late endosome membrane. Its function is as follows. Tethering protein that creates contact site between the endoplasmic reticulum and late endosomes: localizes to late endosome membranes and contacts the endoplasmic reticulum via interaction with VAPA and VAPB. The protein is STARD3 N-terminal-like protein of Mus musculus (Mouse).